Reading from the N-terminus, the 181-residue chain is Succinate dehydrogenase [ubiquinone] cytochrome b small subunit, mitochondrial (181 aa).

The transit peptide at 1–31 directs the protein to the mitochondrion; that stretch reads MMLPRSMKFMTGRRIFHTATVRAFQSTAKKS. Topologically, residues 32–66 are mitochondrial matrix; sequence LTIPFLPVLPQKPGGVRGTPNDAYVPPPENKLEGS. The helical transmembrane segment at 67–88 threads the bilayer; the sequence is YHWYMEKIFALSVVPLATTAML. Residues 89–98 are Mitochondrial intermembrane-facing; that stretch reads TTGPLSTAAD. Residues 99 to 118 form a helical membrane-spanning segment; it reads SFFSVMLLGYCYMEFNSCIT. C109 contacts heme. The Mitochondrial matrix portion of the chain corresponds to 119–127; sequence DYISERVYG. Y120 lines the a ubiquinone pocket. A helical transmembrane segment spans residues 128-148; that stretch reads VWHKYAMYMLGLGSAVSLFGI. The Mitochondrial intermembrane portion of the chain corresponds to 149 to 181; the sequence is YKLETENDGVVGLVKSLWDSSEKDNSQKIEAKK.

It belongs to the CybS family. As to quaternary structure, forms part of complex II containing four subunits: a flavoprotein (FP), an iron-sulfur protein (IP) and a cytochrome b composed of a large and a small subunit.

Its subcellular location is the mitochondrion inner membrane. Its pathway is carbohydrate metabolism; tricarboxylic acid cycle. Its function is as follows. Membrane-anchoring subunit of succinate dehydrogenase (SDH) that is involved in system II of the mitochondrial electron transport chain and is responsible for transferring electrons from succinate to ubiquinone (coenzyme Q). SDH3 and SDH4 form the membrane dimer that anchors the catalytic dimer formed by SDH1 and SDH2 to the matrix surface of the mitochondrial inner membrane. Electrons originating from the catalytic dimer enter the membrane dimer for ubiquinone reduction. This is Succinate dehydrogenase [ubiquinone] cytochrome b small subunit, mitochondrial (SDH4) from Saccharomyces cerevisiae (strain ATCC 204508 / S288c) (Baker's yeast).